The chain runs to 594 residues: Tripeptidyl-peptidase sed4 (594 aa).

Positions 1–20 (MLSSTLYAGWLLSLAAPALC) are cleaved as a signal peptide. Positions 21-187 (VVQEKLSAVP…AVKLPALPRR (167 aa)) are cleaved as a propeptide — removed in mature form. 3 N-linked (GlcNAc...) asparagine glycosylation sites follow: N191, N229, and N250. Residues 197–594 (LITPDCLVEM…MKLKELVLSL (398 aa)) enclose the Peptidase S53 domain. Active-site charge relay system residues include E272, D276, and S494. Ca(2+) contacts are provided by D536 and I537. Residue N568 is glycosylated (N-linked (GlcNAc...) asparagine). Positions 572 and 574 each coordinate Ca(2+).

Ca(2+) is required as a cofactor. In terms of processing, N-glycosylated.

It is found in the secreted. The protein resides in the extracellular space. The enzyme catalyses Release of an N-terminal tripeptide from a polypeptide.. Secreted tripeptidyl-peptidase which degrades proteins at acidic pHs and is involved in virulence. This Aspergillus fumigatus (strain ATCC MYA-4609 / CBS 101355 / FGSC A1100 / Af293) (Neosartorya fumigata) protein is Tripeptidyl-peptidase sed4 (sed4).